The sequence spans 153 residues: MALRVVVGADDAGYEYKEALKGDLAADDRVTEVIDVGVGADEDTAYPHVAVAAARLIAEGKADRALLVCGTGLGVAISANKVPGIRAVTAHDSFSVERSVLSNNAQVLCFGQRVVGLELARRLAREWLGYEFDPTSKSAEKVQAICGYEPATS.

Catalysis depends on cysteine 69, which acts as the Proton acceptor.

It belongs to the LacAB/RpiB family.

The enzyme catalyses D-erythrulose 4-phosphate = D-erythrose 4-phosphate. It participates in carbohydrate metabolism; erythritol degradation. The protein operates within carbohydrate metabolism; D-threitol degradation. Functionally, catalyzes the isomerization of D-erythrulose-4P to D-erythrose-4P. Involved in the degradation pathways of erythritol and D-threitol, that allow M.smegmatis to grow on these compounds as the sole carbon source. The sequence is that of D-erythrulose-4-phosphate isomerase 1 from Mycolicibacterium smegmatis (strain ATCC 700084 / mc(2)155) (Mycobacterium smegmatis).